The primary structure comprises 292 residues: GTP cyclohydrolase FolE2 (292 aa).

It belongs to the GTP cyclohydrolase IV family.

It catalyses the reaction GTP + H2O = 7,8-dihydroneopterin 3'-triphosphate + formate + H(+). Its pathway is cofactor biosynthesis; 7,8-dihydroneopterin triphosphate biosynthesis; 7,8-dihydroneopterin triphosphate from GTP: step 1/1. Its function is as follows. Converts GTP to 7,8-dihydroneopterin triphosphate. The protein is GTP cyclohydrolase FolE2 of Staphylococcus epidermidis (strain ATCC 35984 / DSM 28319 / BCRC 17069 / CCUG 31568 / BM 3577 / RP62A).